The chain runs to 405 residues: S-adenosylmethionine:tRNA ribosyltransferase-isomerase (405 aa).

Belongs to the QueA family. As to quaternary structure, monomer.

The protein resides in the cytoplasm. It carries out the reaction 7-aminomethyl-7-carbaguanosine(34) in tRNA + S-adenosyl-L-methionine = epoxyqueuosine(34) in tRNA + adenine + L-methionine + 2 H(+). It participates in tRNA modification; tRNA-queuosine biosynthesis. In terms of biological role, transfers and isomerizes the ribose moiety from AdoMet to the 7-aminomethyl group of 7-deazaguanine (preQ1-tRNA) to give epoxyqueuosine (oQ-tRNA). The chain is S-adenosylmethionine:tRNA ribosyltransferase-isomerase from Psychrobacter cryohalolentis (strain ATCC BAA-1226 / DSM 17306 / VKM B-2378 / K5).